The sequence spans 362 residues: Alpha-2-HS-glycoprotein (362 aa).

The N-terminal stretch at 1 to 15 is a signal peptide; that stretch reads LILFFCLAQLWGCRA. The Cystatin fetuin-A-type 1 domain maps to 24 to 130; it reads YREPACDDVE…QFSVLFAKCD (107 aa). 6 disulfides stabilise this stretch: cysteine 29–cysteine 353, cysteine 86–cysteine 97, cysteine 111–cysteine 129, cysteine 143–cysteine 146, cysteine 205–cysteine 216, and cysteine 227–cysteine 244. Residue asparagine 96 is glycosylated (N-linked (GlcNAc...) asparagine). 3 positions are modified to phosphoserine: serine 131, serine 132, and serine 135. The Cystatin fetuin-A-type 2 domain maps to 141–252; that stretch reads KVCPNCPLLA…TCTVFQTQPV (112 aa). Residues asparagine 153 and asparagine 173 are each glycosylated (N-linked (GlcNAc...) asparagine). 4 positions are modified to phosphoserine: serine 314, serine 318, serine 321, and serine 323. O-linked (GalNAc...) threonine glycosylation occurs at threonine 332.

The protein belongs to the fetuin family. Post-translationally, phosphorylated by FAM20C in the extracellular medium. As to expression, expressed by the liver and secreted in plasma.

It localises to the secreted. This is Alpha-2-HS-glycoprotein (AHSG) from Sus scrofa (Pig).